The primary structure comprises 601 residues: Elongation factor 4 (601 aa).

Residues 6–188 form the tr-type G domain; the sequence is SHIRNFSIIA…QIVHRVPAPE (183 aa). GTP contacts are provided by residues 18-23 and 135-138; these read DHGKST and NKID.

Belongs to the TRAFAC class translation factor GTPase superfamily. Classic translation factor GTPase family. LepA subfamily.

Its subcellular location is the cell inner membrane. The enzyme catalyses GTP + H2O = GDP + phosphate + H(+). Required for accurate and efficient protein synthesis under certain stress conditions. May act as a fidelity factor of the translation reaction, by catalyzing a one-codon backward translocation of tRNAs on improperly translocated ribosomes. Back-translocation proceeds from a post-translocation (POST) complex to a pre-translocation (PRE) complex, thus giving elongation factor G a second chance to translocate the tRNAs correctly. Binds to ribosomes in a GTP-dependent manner. This Anaeromyxobacter sp. (strain K) protein is Elongation factor 4.